The sequence spans 175 residues: Protein LHCP TRANSLOCATION DEFECT (175 aa).

The transit peptide at 1 to 68 directs the protein to the chloroplast; it reads MASSSISFSC…WFKFGKNGVD (68 aa). The ANK repeat unit spans residues 117 to 149; that stretch reads PVDILLMLAATEGDRPKIEELLKAGADYSVKDA.

As to quaternary structure, interacts with CAO/cpSRP43, but is not a component of the transit complex. Interacts with LHCP (via T14 domain), TIC40 and TIC110. In terms of tissue distribution, highly expressed in leaves and seedlings. Detected in roots, but not in germinating seeds.

The protein resides in the plastid. It localises to the chloroplast thylakoid membrane. The protein localises to the chloroplast envelope. It is found in the chloroplast stroma. Involved in the import of light-harvesting complex proteins (LHCP) and subsequent routing of these proteins to the chloroplast signal recognition particle (SRP) pathway. The sequence is that of Protein LHCP TRANSLOCATION DEFECT (LTD) from Arabidopsis thaliana (Mouse-ear cress).